The chain runs to 194 residues: dTTP/UTP pyrophosphatase (194 aa).

Catalysis depends on D66, which acts as the Proton acceptor.

The protein belongs to the Maf family. YhdE subfamily. A divalent metal cation is required as a cofactor.

The protein localises to the cytoplasm. The catalysed reaction is dTTP + H2O = dTMP + diphosphate + H(+). It carries out the reaction UTP + H2O = UMP + diphosphate + H(+). Nucleoside triphosphate pyrophosphatase that hydrolyzes dTTP and UTP. May have a dual role in cell division arrest and in preventing the incorporation of modified nucleotides into cellular nucleic acids. The sequence is that of dTTP/UTP pyrophosphatase from Anaeromyxobacter dehalogenans (strain 2CP-C).